The following is a 569-amino-acid chain: MSYKINRKTYAQTYGPTKGDRVRLADTELIIEVEKDFTTYGDEVKFGGGKVIRDGMGQSQVTREDGAVDTVITNALIVDWWGIVKADVGLKDGKIYEIGKAGNPDIQDNINIIIGSSTEVIAGEGHILTAGSIDTHIHFICPQQIETALASGVTTMLGGGTGPATGTNATTCTPGAFHISRMIQSAEAFPVNLGFFGKGNSSNETNLFEQVNAGACGLKLHEDWGTTPSTINSCLNVADTLDVQVCIHTDTLNEAGFVEDTIAAIAGRTIHTFHTEGAGGGHAPDIIKICGENNVLPSSTNPTRPYTKNTLEEHLDMLMVCHHLDSKIPEDIAFAESRIRRETIAAEDILHDIGAFSIIASDSQAMGRVGEVITRTFQTAHKMKVQRGPLPEDSDRNDNYRVKRYISKVTINPAIAHGINRFVGSIEKGKIADLVLWKPSFFGVKPELVVKGGSIVWSQMGDANASIPTPGPVHGRPMFANYGQSLLKSSFTFLSKNAIELDIPNKLSLQKNCLAVENTRSINKLDLKLNNKLPNITVDPQTYEVFADGVLLSCEPLEEVPMAQKYFLL.

The region spanning glycine 131–leucine 569 is the Urease domain. Residues histidine 136, histidine 138, and lysine 219 each coordinate Ni(2+). N6-carboxylysine is present on lysine 219. Histidine 221 provides a ligand contact to substrate. 2 residues coordinate Ni(2+): histidine 248 and histidine 274. Residue histidine 322 is the Proton donor of the active site. Aspartate 362 contributes to the Ni(2+) binding site.

This sequence belongs to the metallo-dependent hydrolases superfamily. Urease alpha subunit family. As to quaternary structure, heterotrimer of UreA (gamma), UreB (beta) and UreC (alpha) subunits. Two heterotrimers associate to form the active enzyme. In most bacteria it is thought that three heterotrimers form the active enzyme. It depends on Ni cation as a cofactor. Post-translationally, carboxylation allows a single lysine to coordinate two nickel ions.

Its subcellular location is the cytoplasm. The catalysed reaction is urea + 2 H2O + H(+) = hydrogencarbonate + 2 NH4(+). It functions in the pathway nitrogen metabolism; urea degradation; CO(2) and NH(3) from urea (urease route): step 1/1. Its activity is regulated as follows. Inhibited by HgCl2 and acetohydroxyamic acid slightly by EDTA, but not by boric acid or L-methionine-DL-sulfoximine. This chain is Urease subunit alpha, found in Prochlorococcus marinus subsp. pastoris (strain PCC 9511).